The following is a 176-amino-acid chain: Ribosome maturation factor RimM (176 aa).

Residues 100–173 form the PRC barrel domain; sequence KDEYHYHDLI…WLLINPPPGL (74 aa).

This sequence belongs to the RimM family. As to quaternary structure, binds ribosomal protein uS19.

The protein localises to the cytoplasm. Functionally, an accessory protein needed during the final step in the assembly of 30S ribosomal subunit, possibly for assembly of the head region. Essential for efficient processing of 16S rRNA. May be needed both before and after RbfA during the maturation of 16S rRNA. It has affinity for free ribosomal 30S subunits but not for 70S ribosomes. The sequence is that of Ribosome maturation factor RimM from Prochlorococcus marinus (strain NATL2A).